The following is a 358-amino-acid chain: MTNFEYYRDFDDFQRRETINFFLSKFPLASQKQLQDFLEQARQAYVQLRQTNPAHLDWNQTLLYLAQKFLPEKQSEKDRLKKILVLQEQLKVRYEGEIKRQSQQNSELLIQLGQRDEEIIQMQQLFKEKERQLEVYQKQLNEAKEYNHKLEEHYNKTLEEALKEYEQQCTDAIHRRDEEIQAIFTSKLNEKNSEITQLQTYLQSAVDENEALQKQHKLVLFKNQKYEKMVSDLQVDLARIQEINNSLTSEKRDFQRANNDLVKQYNKLKNRLEQKLGEITNAQVNGQTHTVSLADTSQQFHRPQEAVIPQTQVISYTLDDMDDDMEVEETPPTTNKDLPRGATQPKRNSIKRVSKLID.

The disordered stretch occupies residues 324–358; that stretch reads DMEVEETPPTTNKDLPRGATQPKRNSIKRVSKLID. A compositionally biased stretch (basic residues) spans 348-358; sequence NSIKRVSKLID.

This is an uncharacterized protein from Mycoplasma pneumoniae (strain ATCC 29342 / M129 / Subtype 1) (Mycoplasmoides pneumoniae).